Consider the following 823-residue polypeptide: Endoplasmin homolog (823 aa).

Residues 1-23 (MRKRTLVSVLFLFSLLFLLPDQG) form the signal peptide. Residues 29 to 60 (NAEESSDDVTDPPKVEEKIGGHGGLSTDSDVV) are disordered. Basic and acidic residues predominate over residues 39–48 (DPPKVEEKIG). ATP is bound by residues Glu-106, Asn-110, Asp-154, Met-159, Asn-167, Lys-173, 174–175 (SG), 194–199 (QFGVGF), Phe-199, and Thr-246. The N-linked (GlcNAc...) asparagine glycan is linked to Asn-110. Residues 289 to 328 (ETEVPVEEDESADEETETTSTEEEKEEDAEEEDGEKKQKT) are disordered. The segment covering 290–321 (TEVPVEEDESADEETETTSTEEEKEEDAEEED) has biased composition (acidic residues). N-linked (GlcNAc...) asparagine glycans are attached at residues Asn-452 and Asn-620. Positions 777-792 (VADEEIEAAEEPETSE) are enriched in acidic residues. Residues 777-823 (VADEEIEAAEEPETSEATETKSDDLAGGLNIEAEPVEQQEENTKDEL) form a disordered region. Positions 820-823 (KDEL) match the Prevents secretion from ER motif.

This sequence belongs to the heat shock protein 90 family. As to quaternary structure, interacts with FKBP42. Interacts with P23-1. Ubiquitous.

It localises to the endoplasmic reticulum lumen. May have a molecular chaperone role in the processing of secreted materials. Required for shoot apical meristem (SAM), root apical meristem (RAM) and floral meristem (FM) formation, probably by regulating the folding of CLAVATA proteins (CLVs). Also involved in pollen tube elongation. Involved in resistance to tunicamycin- or high calcium-induced ER stresses. Possesses ATPase activity. The polypeptide is Endoplasmin homolog (Arabidopsis thaliana (Mouse-ear cress)).